The following is a 160-amino-acid chain: Cytochrome b6-f complex subunit 4 (160 aa).

The next 3 membrane-spanning stretches (helical) occupy residues L36–V56, L95–E115, and T131–I151.

Belongs to the cytochrome b family. PetD subfamily. The 4 large subunits of the cytochrome b6-f complex are cytochrome b6, subunit IV (17 kDa polypeptide, petD), cytochrome f and the Rieske protein, while the 4 small subunits are petG, petL, petM and petN. The complex functions as a dimer.

The protein localises to the plastid. It is found in the chloroplast thylakoid membrane. Its function is as follows. Component of the cytochrome b6-f complex, which mediates electron transfer between photosystem II (PSII) and photosystem I (PSI), cyclic electron flow around PSI, and state transitions. The chain is Cytochrome b6-f complex subunit 4 from Pisum sativum (Garden pea).